Consider the following 464-residue polypeptide: Sulfoacetaldehyde dehydrogenase (acylating) (464 aa).

The active-site Nucleophile is cysteine 241.

Belongs to the aldehyde dehydrogenase family.

It catalyses the reaction sulfoacetaldehyde + NADP(+) + CoA = sulfoacetyl-CoA + NADPH + H(+). In terms of biological role, involved in the degradation of sulfoacetate. Catalyzes the conversion of sulfoacetyl-CoA and NADPH to sulfoacetaldehyde, CoA and NADP(+). A much lower level of activity (1%) is observed when NADP(+) is replaced with NAD(+). In Bilophila wadsworthia (strain 3_1_6), this protein is Sulfoacetaldehyde dehydrogenase (acylating).